The following is a 53-amino-acid chain: Conotoxin Cal6.27 (53 aa).

An N-terminal signal peptide occupies residues 1 to 24; the sequence is MKLTCVLIAAMLLLAVCQLDSADA. 3 cysteine pairs are disulfide-bonded: C29/C43, C36/C47, and C42/C51.

Belongs to the conotoxin O1 superfamily. In terms of tissue distribution, expressed by the venom duct.

It is found in the secreted. Functionally, probable neurotoxin. The protein is Conotoxin Cal6.27 of Californiconus californicus (California cone).